We begin with the raw amino-acid sequence, 412 residues long: POU domain, class 4, transcription factor 2 (412 aa).

Residues 29–96 (LHSASPGSSA…SEAMRRACLP (68 aa)) are disordered. Residues 31 to 53 (SASPGSSAPAAPSASSPSSSSNA) show a composition bias toward low complexity. 2 stretches are compositionally biased toward gly residues: residues 54-70 (GSGG…GGGR) and 78-87 (GSGGGGGGGS). Residues 94–240 (CLPTPPSNIF…MHQAALSMAH (147 aa)) form a required for transcriptional activation region. The POU-IV box signature appears at 113 to 122 (RAEALAAVDI). Residues 123-191 (VSQSKSHHHH…HHHHQPHQAL (69 aa)) form a disordered region. Over residues 127-138 (KSHHHHPPHHSP) the composition is skewed to basic residues. A compositionally biased stretch (low complexity) spans 152-169 (PCTSAASSSSVPISHPSA). Basic residues predominate over residues 173 to 187 (THHHHHHHHHHHHQP). Residues 174–188 (HHHHHHHHHHHHQPH) carry the Nuclear speckle targeting signal motif. The tract at residues 241–412 (AHGLPSHMGC…QKRMKYSAGI (172 aa)) is required for DNA-binding and transcriptional repression. Residues 253 to 330 (DVDADPRDLE…ILQAWLEEAE (78 aa)) form the POU-specific domain. Positions 348–407 (KKRKRTSIAAPEKRSLEAYFAIQPRPSSEKIAAIAEKLDLKKNVVRVWFCNQRQKQKRMK) form a DNA-binding region, homeobox.

The protein belongs to the POU transcription factor family. Class-4 subfamily. As to quaternary structure, interacts with POU4F1; this interaction inhibits both POU4F1 DNA-binding and transcriptional activities. Interacts (C-terminus) with ESR1 (via DNA-binding domain); this interaction increases the estrogen receptor ESR1 transcriptional activity in a DNA- and ligand 17-beta-estradiol-independent manner. Interacts (via C-terminus) with TP53 (via N-terminus). Interacts with DLX1 (via homeobox DNA-binding domain); this interaction suppresses DLX1-mediated transcriptional activity in postnatal retina enhancing retinal ganglion cell (RGC) differentiation. Interacts with DLX2 (via homeobox DNA-binding domain); this interaction enhances RGC differentiation. Interacts (via C-terminus) with ISL1 (via C-terminus). Interacts with ISL2. Interacts with LHX2. In terms of tissue distribution, expressed in the heart, brain and spinal cord. Expressed in cardiomyocytes (at protein level). Expressed in brain and spinal cord. Expressed in dorsal root ganglion (RGD) neurons.

It is found in the nucleus. The protein resides in the nucleus speckle. The protein localises to the cytoplasm. Its function is as follows. Tissue-specific DNA-binding transcription factor involved in the development and differentiation of target cells. Functions either as activator or repressor modulating the rate of target gene transcription through RNA polymerase II enzyme in a promoter-dependent manner. Binds to the consensus octamer motif 5'-AT[A/T]A[T/A]T[A/T]A-3' of promoter of target genes. Plays a fundamental role in the gene regulatory network essential for retinal ganglion cell (RGC) differentiation. Binds to an octamer site to form a ternary complex with ISL1; cooperates positively with ISL1 and ISL2 to potentiate transcriptional activation of RGC target genes being involved in RGC fate commitment in the developing retina and RGC axon formation and pathfinding. Inhibits DLX1 and DLX2 transcriptional activities preventing DLX1- and DLX2-mediated ability to promote amacrine cell fate specification. In cooperation with TP53 potentiates transcriptional activation of BAX promoter activity increasing neuronal cell apoptosis. Negatively regulates BAX promoter activity in the absence of TP53. Acts as a transcriptional coactivator via its interaction with the transcription factor ESR1 by enhancing its effect on estrogen response element (ERE)-containing promoter. Antagonizes the transcriptional stimulatory activity of POU4F1 by preventing its binding to an octamer motif. Involved in TNFSF11-mediated terminal osteoclast differentiation. In Rattus norvegicus (Rat), this protein is POU domain, class 4, transcription factor 2.